A 311-amino-acid polypeptide reads, in one-letter code: Probable manganese-dependent inorganic pyrophosphatase (311 aa).

Positions 9, 13, 15, 75, 97, and 149 each coordinate Mn(2+).

This sequence belongs to the PPase class C family. Mn(2+) is required as a cofactor.

It is found in the cytoplasm. The catalysed reaction is diphosphate + H2O = 2 phosphate + H(+). This chain is Probable manganese-dependent inorganic pyrophosphatase, found in Shouchella clausii (strain KSM-K16) (Alkalihalobacillus clausii).